A 309-amino-acid polypeptide reads, in one-letter code: Homoserine kinase (309 aa).

Residue 95-105 (PQSRGLGSSAA) participates in ATP binding.

The protein belongs to the GHMP kinase family. Homoserine kinase subfamily.

It is found in the cytoplasm. It catalyses the reaction L-homoserine + ATP = O-phospho-L-homoserine + ADP + H(+). It functions in the pathway amino-acid biosynthesis; L-threonine biosynthesis; L-threonine from L-aspartate: step 4/5. In terms of biological role, catalyzes the ATP-dependent phosphorylation of L-homoserine to L-homoserine phosphate. This chain is Homoserine kinase, found in Corynebacterium glutamicum (strain R).